A 114-amino-acid polypeptide reads, in one-letter code: Putative small ubiquitin-related modifier 4 (114 aa).

Residues 1 to 20 (MSTTSRVGSNEVKMEGQKRK) form a disordered region. A Ubiquitin-like domain is found at 26–104 (THVTLKVKGQ…IDAMLCQQSG (79 aa)). Residue Gly-104 forms a Glycyl lysine isopeptide (Gly-Lys) (interchain with K-? in acceptor proteins) linkage.

This sequence belongs to the ubiquitin family. SUMO subfamily. As to quaternary structure, interacts with SAE2, SCE1, SIZ1 and MMS21 Covalently attached to a number of proteins.

It localises to the nucleus. It is found in the cytoplasm. Its function is as follows. Ubiquitin-like protein which can be covalently attached to target lysines as a monomer. Does not seem to be involved in protein degradation and may function as an antagonist of ubiquitin in the degradation process. The protein is Putative small ubiquitin-related modifier 4 (SUMO4) of Arabidopsis thaliana (Mouse-ear cress).